The chain runs to 108 residues: Integration host factor subunit alpha (108 aa).

This sequence belongs to the bacterial histone-like protein family. Heterodimer of an alpha and a beta chain.

In terms of biological role, this protein is one of the two subunits of integration host factor, a specific DNA-binding protein that functions in genetic recombination as well as in transcriptional and translational control. The chain is Integration host factor subunit alpha from Bartonella henselae (strain ATCC 49882 / DSM 28221 / CCUG 30454 / Houston 1) (Rochalimaea henselae).